Consider the following 908-residue polypeptide: Glutamate receptor ionotropic, kainate 2 (908 aa).

The first 31 residues, 1–31, serve as a signal peptide directing secretion; that stretch reads MQRIAGITKMVTHRRWLGLLLLLLCVGYSHG. Residues 32–561 lie on the Extracellular side of the membrane; sequence MPHVLRFGGI…VFSFLNPLSP (530 aa). N-linked (GlcNAc...) asparagine glycosylation is found at Asn-67, Asn-73, Asn-275, Asn-378, Asn-412, Asn-423, and Asn-430. A disulfide bridge links Cys-96 with Cys-347. 3 residues coordinate L-glutamate: Pro-516, Ala-518, and Arg-523. The N-linked (GlcNAc...) asparagine glycan is linked to Asn-546. The helical transmembrane segment at 562-582 threads the bilayer; sequence DIWMYILLAYLGVSCVLFVIA. The Cytoplasmic segment spans residues 583 to 638; sequence RFSPYEWYNPHPCNPDSDVVENNFTLLNSFWFGVGALMQQGSELMPKALSTRIVGG. A helical transmembrane segment spans residues 639 to 659; the sequence is IWWFFTLIIISSYTANLAAFL. At 660-819 the chain is on the extracellular side; the sequence is TVERMESPID…KEASALGVQN (160 aa). L-glutamate contacts are provided by Ser-689, Thr-690, and Glu-738. Cys-750 and Cys-804 are joined by a disulfide. The N-linked (GlcNAc...) asparagine glycan is linked to Asn-751. Residues 820 to 840 form a helical membrane-spanning segment; the sequence is IGGIFIVLAAGLVLSVFVAVG. Residues 841-908 are Cytoplasmic-facing; that stretch reads EFLYKSKQNA…RRLPGKETMA (68 aa).

The protein belongs to the glutamate-gated ion channel (TC 1.A.10.1) family. GRIK2 subfamily. In terms of assembly, homotetramer and heterotetramer with GRIK5. Tetramers may be formed by the dimerization of dimers.

The protein resides in the cell membrane. It is found in the postsynaptic cell membrane. The catalysed reaction is Ca(2+)(in) = Ca(2+)(out). The enzyme catalyses Na(+)(in) = Na(+)(out). Its activity is regulated as follows. Cold receptor activity activated by temperatures between 10-19 degrees Celsius. Ionotropic glutamate receptor that functions as a cation-permeable ligand-gated ion channel, gated by L-glutamate and the glutamatergic agonist kainic acid. L-glutamate acts as an excitatory neurotransmitter at many synapses in the central nervous system. Binding of the excitatory neurotransmitter L-glutamate induces a conformation change, leading to the opening of the cation channel, and thereby converts the chemical signal to an electrical impulse. The receptor then desensitizes rapidly and enters a transient inactive state, characterized by the presence of bound agonist. In terms of biological role, independent of its ionotropic glutamate receptor activity, acts as a thermoreceptor conferring sensitivity to cold temperatures. Functions in dorsal root ganglion neurons. This is Glutamate receptor ionotropic, kainate 2 from Danio rerio (Zebrafish).